A 129-amino-acid chain; its full sequence is Glycine cleavage system H protein (129 aa).

Positions 24 to 106 (TYTVGITEHA…YAGGWIFKIK (83 aa)) constitute a Lipoyl-binding domain. Residue K65 is modified to N6-lipoyllysine.

It belongs to the GcvH family. In terms of assembly, the glycine cleavage system is composed of four proteins: P, T, L and H. (R)-lipoate is required as a cofactor.

The glycine cleavage system catalyzes the degradation of glycine. The H protein shuttles the methylamine group of glycine from the P protein to the T protein. This chain is Glycine cleavage system H protein, found in Escherichia coli O45:K1 (strain S88 / ExPEC).